The following is a 495-amino-acid chain: Maturase K (495 aa).

The protein belongs to the intron maturase 2 family. MatK subfamily.

It localises to the plastid. The protein resides in the chloroplast. Usually encoded in the trnK tRNA gene intron. Probably assists in splicing its own and other chloroplast group II introns. The chain is Maturase K from Torreya californica (California nutmeg).